Consider the following 80-residue polypeptide: Serine palmitoyltransferase small subunit B (80 aa).

At 1-11 (MDMKNMREYMS) the chain is on the cytoplasmic side. A helical transmembrane segment spans residues 12-29 (WLYYQYLLITGIYVLEPW). Residues 30 to 36 (EQSIFNT) lie on the Lumenal side of the membrane. A helical transmembrane segment spans residues 37 to 57 (VLFTMVAMVIYTSYVFVPIHV). At 58-80 (RLALEFFCELVGGQPESTVALMT) the chain is on the cytoplasmic side.

The protein belongs to the SPTSS family. SPTSSB subfamily. As to quaternary structure, component of the serine palmitoyltransferase (SPT) complex, which is composed of SPTLC1, SPTLC2 or SPTLC3 and SPTSSA or SPTSSB. The heterodimer consisting of SPTLC1 and SPTLC2/SPTLC3 forms the catalytic core of the enzyme, while SPTSSA or SPTSSB subunits determine substrate specificity. SPT also interacts with ORMDL proteins, especially ORMDL3, which negatively regulate SPT activity in the presence of ceramides.

It is found in the endoplasmic reticulum membrane. It participates in lipid metabolism; sphingolipid metabolism. Functionally, component of the serine palmitoyltransferase multisubunit enzyme (SPT) that catalyzes the initial and rate-limiting step in sphingolipid biosynthesis by condensing L-serine and activated acyl-CoA (most commonly palmitoyl-CoA) to form long-chain bases. The SPT complex is composed of SPTLC1, SPTLC2 or SPTLC3 and SPTSSA or SPTSSB. Within this complex, the heterodimer consisting of SPTLC1 and SPTLC2/SPTLC3 forms the catalytic core. Within the SPT complex, SPTSSB stimulates the catalytic activity and plays a role in substrate specificity. SPT complexes with this subunit showing a preference for longer acyl-CoAs. The SPTLC1-SPTLC2-SPTSSB complex shows a strong preference for C18-CoA substrate, while the SPTLC1-SPTLC3-SPTSSB isozyme displays an ability to use a broader range of acyl-CoAs, without apparent preference. This chain is Serine palmitoyltransferase small subunit B (sptssb), found in Danio rerio (Zebrafish).